The following is a 372-amino-acid chain: Chaperone protein DnaJ (372 aa).

The J domain occupies 5–70 (DYYDLLEVSR…EKRAGYDRYG (66 aa)). The CR-type zinc-finger motif lies at 134–212 (GIQAPIHYVT…CGGSGRKRDE (79 aa)). Cys147, Cys150, Cys164, Cys167, Cys186, Cys189, Cys200, and Cys203 together coordinate Zn(2+). CXXCXGXG motif repeat units follow at residues 147-154 (CNTCQGTG), 164-171 (CNTCQGSG), 186-193 (CTTCYGEG), and 200-207 (CKKCGGSG).

It belongs to the DnaJ family. As to quaternary structure, homodimer. The cofactor is Zn(2+).

Its subcellular location is the cytoplasm. In terms of biological role, participates actively in the response to hyperosmotic and heat shock by preventing the aggregation of stress-denatured proteins and by disaggregating proteins, also in an autonomous, DnaK-independent fashion. Unfolded proteins bind initially to DnaJ; upon interaction with the DnaJ-bound protein, DnaK hydrolyzes its bound ATP, resulting in the formation of a stable complex. GrpE releases ADP from DnaK; ATP binding to DnaK triggers the release of the substrate protein, thus completing the reaction cycle. Several rounds of ATP-dependent interactions between DnaJ, DnaK and GrpE are required for fully efficient folding. Also involved, together with DnaK and GrpE, in the DNA replication of plasmids through activation of initiation proteins. This is Chaperone protein DnaJ from Wolbachia pipientis subsp. Culex pipiens (strain wPip).